Consider the following 277-residue polypeptide: Membrane protein insertase YidC 2 (277 aa).

Residues 1–22 (MKKYRKILAMLAVLAIVLVLSG) form the signal peptide. The N-palmitoyl cysteine moiety is linked to residue cysteine 23. A lipid anchor (S-diacylglycerol cysteine) is attached at cysteine 23. A run of 5 helical transmembrane segments spans residues 35-55 (FWDGLIILNFSRAIIWLSNLF), 60-80 (GLGIIVFTLIIRIIILPLMIF), 130-150 (ASMLPLLVQLPILIALYQAIW), 170-190 (PYYVLPILAAIFTFASSWLAM), and 208-228 (PVIILITAINVPSALSLYWVI). A compositionally biased stretch (basic and acidic residues) spans 251–266 (EAKKQAERDRKRTLEK). A disordered region spans residues 251–277 (EAKKQAERDRKRTLEKARKRAIRNHKR). The segment covering 267-277 (ARKRAIRNHKR) has biased composition (basic residues).

The protein belongs to the OXA1/ALB3/YidC family. Type 2 subfamily.

It localises to the cell membrane. In terms of biological role, required for the insertion and/or proper folding and/or complex formation of integral membrane proteins into the membrane. Involved in integration of membrane proteins that insert both dependently and independently of the Sec translocase complex, as well as at least some lipoproteins. The polypeptide is Membrane protein insertase YidC 2 (Lactiplantibacillus plantarum (strain ATCC BAA-793 / NCIMB 8826 / WCFS1) (Lactobacillus plantarum)).